We begin with the raw amino-acid sequence, 158 residues long: NADH-quinone oxidoreductase subunit B (158 aa).

Residues C37, C38, C102, and C132 each coordinate [4Fe-4S] cluster.

Belongs to the complex I 20 kDa subunit family. NDH-1 is composed of 14 different subunits. Subunits NuoB, C, D, E, F, and G constitute the peripheral sector of the complex. [4Fe-4S] cluster is required as a cofactor.

The protein localises to the cell inner membrane. The catalysed reaction is a quinone + NADH + 5 H(+)(in) = a quinol + NAD(+) + 4 H(+)(out). Its function is as follows. NDH-1 shuttles electrons from NADH, via FMN and iron-sulfur (Fe-S) centers, to quinones in the respiratory chain. Couples the redox reaction to proton translocation (for every two electrons transferred, four hydrogen ions are translocated across the cytoplasmic membrane), and thus conserves the redox energy in a proton gradient. This Alkalilimnicola ehrlichii (strain ATCC BAA-1101 / DSM 17681 / MLHE-1) protein is NADH-quinone oxidoreductase subunit B.